Consider the following 254-residue polypeptide: 4-hydroxy-tetrahydrodipicolinate reductase (254 aa).

7 to 12 is a binding site for NAD(+); the sequence is GASGRI. R35 contacts NADP(+). Residues 91 to 93 and 115 to 118 each bind NAD(+); these read GTT and AHNM. H147 serves as the catalytic Proton donor/acceptor. (S)-2,3,4,5-tetrahydrodipicolinate is bound at residue H148. The active-site Proton donor is K151. A (S)-2,3,4,5-tetrahydrodipicolinate-binding site is contributed by 157–158; sequence GT.

Belongs to the DapB family.

Its subcellular location is the cytoplasm. It catalyses the reaction (S)-2,3,4,5-tetrahydrodipicolinate + NAD(+) + H2O = (2S,4S)-4-hydroxy-2,3,4,5-tetrahydrodipicolinate + NADH + H(+). The enzyme catalyses (S)-2,3,4,5-tetrahydrodipicolinate + NADP(+) + H2O = (2S,4S)-4-hydroxy-2,3,4,5-tetrahydrodipicolinate + NADPH + H(+). Its pathway is amino-acid biosynthesis; L-lysine biosynthesis via DAP pathway; (S)-tetrahydrodipicolinate from L-aspartate: step 4/4. Catalyzes the conversion of 4-hydroxy-tetrahydrodipicolinate (HTPA) to tetrahydrodipicolinate. The chain is 4-hydroxy-tetrahydrodipicolinate reductase from Helicobacter pylori (strain ATCC 700392 / 26695) (Campylobacter pylori).